The primary structure comprises 621 residues: GPI-anchor transamidase component GPAA1 (621 aa).

Residues 2–19 (GLLSDPVRRRALARLVLR) are Cytoplasmic-facing. The helical transmembrane segment at 20 to 41 (LNAPLCVLSYVAGIAWFLALVF) threads the bilayer. At 42-370 (PPLTQRTYMS…LLPGLSRFVS (329 aa)) the chain is on the lumenal side. Residues tyrosine 49 and serine 51 each coordinate a 2-acyl-6-[6-phosphoethanolamine-alpha-D-mannosyl-(1-&gt;2)-6-phosphoethanolamine-alpha-D-mannosyl-(1-&gt;6)-2-phosphoethanolamine-alpha-D-mannosyl-(1-&gt;4)-alpha-D-glucosaminyl]-1-(1-radyl,2-acyl-sn-glycero-3-phospho)-1D-myo-inositol. An N-linked (GlcNAc...) asparagine glycan is attached at asparagine 203. Residues cysteine 259 and cysteine 266 are joined by a disulfide bond. A 2-acyl-6-[6-phosphoethanolamine-alpha-D-mannosyl-(1-&gt;2)-6-phosphoethanolamine-alpha-D-mannosyl-(1-&gt;6)-2-phosphoethanolamine-alpha-D-mannosyl-(1-&gt;4)-alpha-D-glucosaminyl]-1-(1-radyl,2-acyl-sn-glycero-3-phospho)-1D-myo-inositol contacts are provided by histidine 354, glutamine 355, and serine 356. Glutamine 355 provides a ligand contact to Mg(2+). The helical transmembrane segment at 371 to 393 (IGLYMPAVGFLLLVLGLKALELW) threads the bilayer. Topologically, residues 394-425 (MQLHEAGMGLEEPGGAPGPSVPLPPSQGVGLA) are cytoplasmic. The helical transmembrane segment at 426–450 (SLVAPLLISQAMGLALYVLPVLGQH) threads the bilayer. Over 451-462 (VATQHFPVAEAE) the chain is Lumenal. A helical transmembrane segment spans residues 463–483 (AVVLTLLAIYAAGLALPHNTH). Residues 484–495 (RVVSTQAPDRGW) lie on the Cytoplasmic side of the membrane. Transmembrane regions (helical) follow at residues 496 to 519 (MALK…TNFS) and 520 to 536 (LGFL…ALAK). The Cytoplasmic portion of the chain corresponds to 537–540 (PHGP). A helical transmembrane segment spans residues 541-563 (RTLYAALLVLTSPAATLLGSLFL). Residues 564-597 (WRELQEAPLSLAEGWQLFLAALAQGVLEHHTYGA) are Lumenal-facing. Residues 598 to 619 (LLFPLLSLGLYPCWLLFWNVLF) traverse the membrane as a helical segment. Residues 620–621 (WK) lie on the Cytoplasmic side of the membrane.

In terms of assembly, heteropentamer. Part of the GPI-anchor transamidase complex, consisting of PIGK, PIGT, PIGS, PIGU and GAA1. Interacts with PIGK. Ubiquitously expressed in fetal and adult tissues. Expressed at higher levels in fetal tissues than adult tissues.

Its subcellular location is the endoplasmic reticulum membrane. It functions in the pathway glycolipid biosynthesis; glycosylphosphatidylinositol-anchor biosynthesis. Its function is as follows. Component of the glycosylphosphatidylinositol-anchor (GPI-anchor) transamidase (GPI-T) complex that catalyzes the formation of the linkage between a proprotein and a GPI-anchor and participates in GPI anchored protein biosynthesis. Binds GPI-anchor. The protein is GPI-anchor transamidase component GPAA1 of Homo sapiens (Human).